The primary structure comprises 259 residues: Type III pantothenate kinase (259 aa).

Residue Asp6–Val13 participates in ATP binding. Substrate contacts are provided by residues Tyr100 and Gly107–Arg110. The Proton acceptor role is filled by Asp109. A K(+)-binding site is contributed by Asp129. Thr132 contacts ATP. Residue Thr184 coordinates substrate.

The protein belongs to the type III pantothenate kinase family. As to quaternary structure, homodimer. NH4(+) serves as cofactor. The cofactor is K(+).

The protein localises to the cytoplasm. It carries out the reaction (R)-pantothenate + ATP = (R)-4'-phosphopantothenate + ADP + H(+). Its pathway is cofactor biosynthesis; coenzyme A biosynthesis; CoA from (R)-pantothenate: step 1/5. In terms of biological role, catalyzes the phosphorylation of pantothenate (Pan), the first step in CoA biosynthesis. In Clostridium perfringens (strain 13 / Type A), this protein is Type III pantothenate kinase.